The sequence spans 178 residues: MMNEHSIDTDNRKANNALYLFIIIGLIPLLCIFVVYYKTPDALLLRKIATSTENLPSITSSYNPLMTKVMDIYCKTAPFLALILYILTFKIRKLINNTDRNTVLRSCLLSPLVYAAIVYLFCFRNFELTTAGRPVRLMATNDATLLLFYIGLYSIIFFTTYITLFTPVTAFKLLKKRQ.

Residues 1 to 13 are Cytoplasmic-facing; sequence MMNEHSIDTDNRK. Residues 14 to 37 form a helical membrane-spanning segment; sequence ANNALYLFIIIGLIPLLCIFVVYY. Residues 38-68 are Periplasmic-facing; that stretch reads KTPDALLLRKIATSTENLPSITSSYNPLMTK. The chain crosses the membrane as a helical span at residues 69–89; that stretch reads VMDIYCKTAPFLALILYILTF. At 90-105 the chain is on the cytoplasmic side; the sequence is KIRKLINNTDRNTVLR. Residues 106 to 123 form a helical membrane-spanning segment; that stretch reads SCLLSPLVYAAIVYLFCF. The Periplasmic portion of the chain corresponds to 124–142; sequence RNFELTTAGRPVRLMATND. The chain crosses the membrane as a helical span at residues 143–165; it reads ATLLLFYIGLYSIIFFTTYITLF. The Cytoplasmic segment spans residues 166–178; it reads TPVTAFKLLKKRQ.

The protein localises to the cell inner membrane. Its function is as follows. This protein is able to protect a cell, which harbors the plasmid ColA encoding colicin A, against colicin A. The protein is Colicin-A immunity protein (cai) of Citrobacter freundii.